The following is a 160-amino-acid chain: S-ribosylhomocysteine lyase (160 aa).

Residues histidine 57, histidine 61, and cysteine 127 each coordinate Fe cation.

The protein belongs to the LuxS family. As to quaternary structure, homodimer. Requires Fe cation as cofactor.

It catalyses the reaction S-(5-deoxy-D-ribos-5-yl)-L-homocysteine = (S)-4,5-dihydroxypentane-2,3-dione + L-homocysteine. In terms of biological role, involved in the synthesis of autoinducer 2 (AI-2) which is secreted by bacteria and is used to communicate both the cell density and the metabolic potential of the environment. The regulation of gene expression in response to changes in cell density is called quorum sensing. Catalyzes the transformation of S-ribosylhomocysteine (RHC) to homocysteine (HC) and 4,5-dihydroxy-2,3-pentadione (DPD). This Streptococcus suis (strain 98HAH33) protein is S-ribosylhomocysteine lyase.